The following is a 128-amino-acid chain: Probable cystatin-15 (128 aa).

A signal peptide spans 1 to 20; the sequence is MFWKLPLLLGLLALGPHVCS. Residues Cys82 and Cys92 are joined by a disulfide bond. N-linked (GlcNAc...) asparagine glycosylation occurs at Asn104. The cysteines at positions 105 and 125 are disulfide-linked.

This sequence belongs to the cystatin family.

It is found in the secreted. In Bos taurus (Bovine), this protein is Probable cystatin-15.